Here is a 620-residue protein sequence, read N- to C-terminus: Chaperone protein HscA homolog (620 aa).

It belongs to the heat shock protein 70 family.

In terms of biological role, chaperone involved in the maturation of iron-sulfur cluster-containing proteins. Has a low intrinsic ATPase activity which is markedly stimulated by HscB. This Pasteurella multocida (strain Pm70) protein is Chaperone protein HscA homolog.